The sequence spans 325 residues: Diacylglycerol acyltransferase/mycolyltransferase Ag85B (325 aa).

An N-terminal signal peptide occupies residues 1–40 (MTDVSRKIRAWGRRLMIGTAAAVVLPGLVGLAGGAATAGA). Residue 82–83 (LR) coordinates substrate. Positions 98-108 (FEWYYQSGLSI) are fibronectin-binding. The cysteines at positions 127 and 132 are disulfide-linked. Substrate-binding residues include Ser166 and Asp194. Ser166 acts as the Nucleophile in catalysis. The active site involves Glu270. Substrate-binding positions include 272 to 275 (FVRS), Lys279, and 302 to 304 (HSW). His302 is a catalytic residue.

The protein belongs to the mycobacterial A85 antigen family.

It localises to the secreted. The catalysed reaction is 2 alpha,alpha'-trehalose 6-mycolate = alpha,alpha'-trehalose 6,6'-bismycolate + alpha,alpha-trehalose. The enzyme catalyses an acyl-CoA + a 1,2-diacyl-sn-glycerol = a triacyl-sn-glycerol + CoA. In terms of biological role, the antigen 85 proteins (FbpA, FbpB, FbpC) are responsible for the high affinity of mycobacteria for fibronectin, a large adhesive glycoprotein, which facilitates the attachment of Mycobacteria to murine alveolar macrophages (AMs). They also help to maintain the integrity of the cell wall by catalyzing the transfer of mycolic acids to cell wall arabinogalactan and through the synthesis of alpha,alpha-trehalose dimycolate (TDM, cord factor). They catalyze the transfer of a mycoloyl residue from one molecule of alpha,alpha-trehalose monomycolate (TMM) to another TMM, leading to the formation of TDM. This Mycobacterium bovis (strain BCG / Pasteur 1173P2) protein is Diacylglycerol acyltransferase/mycolyltransferase Ag85B (fbpB).